The primary structure comprises 736 residues: Phosphoribosylformylglycinamidine synthase subunit PurL (736 aa).

His49 is an active-site residue. ATP contacts are provided by Tyr52 and Lys91. Glu93 contributes to the Mg(2+) binding site. Substrate contacts are provided by residues 94-97 (SHNH) and Arg116. The Proton acceptor role is filled by His95. Residue Asp117 participates in Mg(2+) binding. Residue Gln240 participates in substrate binding. Asp268 provides a ligand contact to Mg(2+). Residue 312-314 (ESQ) coordinates substrate. Positions 493 and 530 each coordinate ATP. Asn531 contributes to the Mg(2+) binding site. Ser533 lines the substrate pocket.

Belongs to the FGAMS family. In terms of assembly, monomer. Part of the FGAM synthase complex composed of 1 PurL, 1 PurQ and 2 PurS subunits.

The protein localises to the cytoplasm. It catalyses the reaction N(2)-formyl-N(1)-(5-phospho-beta-D-ribosyl)glycinamide + L-glutamine + ATP + H2O = 2-formamido-N(1)-(5-O-phospho-beta-D-ribosyl)acetamidine + L-glutamate + ADP + phosphate + H(+). It participates in purine metabolism; IMP biosynthesis via de novo pathway; 5-amino-1-(5-phospho-D-ribosyl)imidazole from N(2)-formyl-N(1)-(5-phospho-D-ribosyl)glycinamide: step 1/2. In terms of biological role, part of the phosphoribosylformylglycinamidine synthase complex involved in the purines biosynthetic pathway. Catalyzes the ATP-dependent conversion of formylglycinamide ribonucleotide (FGAR) and glutamine to yield formylglycinamidine ribonucleotide (FGAM) and glutamate. The FGAM synthase complex is composed of three subunits. PurQ produces an ammonia molecule by converting glutamine to glutamate. PurL transfers the ammonia molecule to FGAR to form FGAM in an ATP-dependent manner. PurS interacts with PurQ and PurL and is thought to assist in the transfer of the ammonia molecule from PurQ to PurL. The sequence is that of Phosphoribosylformylglycinamidine synthase subunit PurL from Rhodopseudomonas palustris (strain BisB18).